The chain runs to 148 residues: Troponin C (148 aa).

EF-hand domains lie at 8-43 (KQFNDAHQAFKLHDKKDEGAVSNKELTNLFKSLALH), 44-79 (VSDDKLQQWVDEMDEDATGVIRWEKFKILFERKVQE), 81-116 (EDERELRSAFRVLDKNNQGVIDVEDLRWILKSLGDD), and 117-148 (LNDDEIQDMINETDTDGSGTVDYEEFSALMLG). 5 residues coordinate Ca(2+): aspartate 130, aspartate 132, serine 134, threonine 136, and glutamate 141.

The protein belongs to the troponin C family.

Troponin is the central regulatory protein of striated muscle contraction. Tn consists of three components: Tn-I which is the inhibitor of actomyosin ATPase, Tn-T which contains the binding site for tropomyosin and Tn-C. The binding of calcium to Tn-C abolishes the inhibitory action of Tn on actin filaments. This chain is Troponin C, found in Todarodes pacificus (Japanese flying squid).